We begin with the raw amino-acid sequence, 104 residues long: Precursor of CEP11 (104 aa).

A signal peptide spans 1-27 (MAKTRRVIYLFLTIVLLFCELIDEAQG). Residues 28-85 (SRFRCHHSEDYSCKKRSSHHHHHHHHHQQQQHHHKDTPPEELQGSIKTRRSKDIYGLN) constitute a propeptide that is removed on maturation. A disordered region spans residues 37–104 (DYSCKKRSSH…SPGVGHLIKT (68 aa)). Basic residues predominate over residues 41–62 (KKRSSHHHHHHHHHQQQQHHHK). Hydroxyproline is present on residues Pro92 and Pro96. Positions 101 to 104 (LIKT) are excised as a propeptide.

It belongs to the C-terminally encoded plant signaling peptide (CEP) family. In terms of assembly, interacts with CEP receptors (e.g. CEPR1 and CEPR2). In terms of processing, the mature small signaling peptide is generated by proteolytic processing of the longer precursor. Expressed in lateral root primordia and in lateral roots excluding the meristem region.

It is found in the secreted. The protein localises to the extracellular space. Its subcellular location is the apoplast. Its function is as follows. Extracellular signaling peptide that may regulate primary root growth rate and systemic nitrogen (N)-demand signaling. Mediates up-regulation of genes involved in N uptake and assimilation pathways. The polypeptide is Precursor of CEP11 (Arabidopsis thaliana (Mouse-ear cress)).